The chain runs to 786 residues: MTESNLGAQSRTATIDNGAFGTRVITFSTGRLARQAAGSVVAQLGETVVLSATTVGRQPKEQFDFFPLTVDVEERMYAAGRIPGSFFRREGRPSEDAILTCRLIDRPLRPSFVKGLRNEVQVVETVLALDPSHPYDVVAINAASMSTKLSGLPFSGPIGATRMAHIDGSWVAFPTHEELERATFDMVVAGRALPDGDVAIMMVEAEATEHTVKLVAGGASAPTEEVVASGLEAAKPAIRELCRAQSELAEVAAKPVAEFPVFLDYSDDAYQAVADLARSDVAEALKIAGKADREEALDRIKARVIEDLGPRFEGREKELSAALRSLTKSEVRSRVLREQVRIDGRGPRDIRPLTAEVGVLPRVHGSALFERGETQILGVTTLNMLRMEQSLDTLSPEKSKRYMHNYNFPPYSTGETGRVGSPKRREIGHGALAERALIPVLPSREEFPYAIRQVSEALGSNGSTSMGSVCASTLGLLSAGVPLKAPVAGIAMGLISDEVEGKTRYVTLTDILGAEDAFGDMDFKVAGTQEFVTALQLDTKLDGIPSDVLAAALQQAYEARQTILEVMQAAIEAPATMSDYAPRVTTVKIPVDKIGMVIGPKGQTINAIQDETGAEISIEDDGTIYVGATNGPSAQAAVERVNAIANPTLPKVGDRFLGTVVKTAAFGAFVSLLPGRDGLLHISKVGDGKRVEKVEDYLNVGDKVEVEIADIDQRGKIYLDKVRPEGAEGPAEAAATDRPAGRDRGDRAPRDRGDRGDRERGSRGPDRGDGGEGGGESRPRRRTRHS.

The Mg(2+) site is built by Asp-516 and Asp-522. The 60-residue stretch at 582–641 folds into the KH domain; that stretch reads PRVTTVKIPVDKIGMVIGPKGQTINAIQDETGAEISIEDDGTIYVGATNGPSAQAAVERV. One can recognise an S1 motif domain in the interval 653–722; the sequence is GDRFLGTVVK…QRGKIYLDKV (70 aa). The interval 722-786 is disordered; the sequence is VRPEGAEGPA…SRPRRRTRHS (65 aa). Over residues 727-738 the composition is skewed to low complexity; that stretch reads AEGPAEAAATDR. Residues 739–778 are compositionally biased toward basic and acidic residues; it reads PAGRDRGDRAPRDRGDRGDRERGSRGPDRGDGGEGGGESR.

It belongs to the polyribonucleotide nucleotidyltransferase family. Mg(2+) serves as cofactor.

The protein resides in the cytoplasm. It catalyses the reaction RNA(n+1) + phosphate = RNA(n) + a ribonucleoside 5'-diphosphate. Its function is as follows. Involved in mRNA degradation. Catalyzes the phosphorolysis of single-stranded polyribonucleotides processively in the 3'- to 5'-direction. This chain is Polyribonucleotide nucleotidyltransferase, found in Salinispora arenicola (strain CNS-205).